The sequence spans 255 residues: Aliphatic sulfonates import ATP-binding protein SsuB (255 aa).

An ABC transporter domain is found at 12 to 233 (LLLNAVSKHY…RLGSVRLAEL (222 aa)). ATP is bound at residue 44 to 51 (GRSGGGKS).

This sequence belongs to the ABC transporter superfamily. Aliphatic sulfonates importer (TC 3.A.1.17.2) family. In terms of assembly, the complex is composed of two ATP-binding proteins (SsuB), two transmembrane proteins (SsuC) and a solute-binding protein (SsuA).

The protein localises to the cell inner membrane. It catalyses the reaction ATP + H2O + aliphatic sulfonate-[sulfonate-binding protein]Side 1 = ADP + phosphate + aliphatic sulfonateSide 2 + [sulfonate-binding protein]Side 1.. In terms of biological role, part of the ABC transporter complex SsuABC involved in aliphatic sulfonates import. Responsible for energy coupling to the transport system. The sequence is that of Aliphatic sulfonates import ATP-binding protein SsuB from Shigella flexneri.